A 582-amino-acid chain; its full sequence is MLLALLRQHIRPYRRLVAMLMMLQLVSTLASLYLPTVNAAIVDDGVAKGDTATIVRLGAVMLGVTGLQVLCAIGAVYLGSRTGAGFGRDLRSAMFEHIITFSERETARFGAPTLLTRSTNDVRQILFLVQMTATVLVTAPIMCVGGIIMAIHQEAALTWLLLVSVPILAVANYWIISHMLPLFRRMQSLIDGINRVMRDQLSGVRVVRAFTREGYERDKFAQANTALSNAALSAGNWQALMLPVTTLTINASSVALIWFGGLRIDSGQMQVGSLIAFLSYFAQILMAVLMATMTLAVLPRASVCAERITEVLSTPAALGNPDNPKFPTDGVTGVVRLAGATFTYPGADCPVLQDISLTARPGTTTAIVGSTGSGKSTLVSLICRLYDVTAGAVLVDGIDVREYHTERLWSAIGLVPQRSYLFSGTVADNLRYGGGPDQVVTEQEMWEALRVAAADGFVQTDGLQTRVAQGGVNFSGGQRQRLAIARAVIRRPAIYVFDDAFSALDVHTDAKVHASLRQVSGDATIIVVTQRISNAAQADQVIVVDNGKIVGTGTHETLLADCPTYAEFAASQSLSATVGGVG.

6 consecutive transmembrane segments (helical) span residues 17–37 (VAML…LPTV), 57–77 (LGAV…GAVY), 131–151 (MTAT…IMAI), 156–176 (ALTW…YWII), 239–259 (ALML…LIWF), and 271–291 (VGSL…VLMA). The 284-residue stretch at 17-300 (VAMLMMLQLV…ATMTLAVLPR (284 aa)) folds into the ABC transmembrane type-1 domain. One can recognise an ABC transporter domain in the interval 335-571 (VRLAGATFTY…CPTYAEFAAS (237 aa)). 369–376 (GSTGSGKS) lines the ATP pocket.

The protein belongs to the ABC transporter superfamily. MsbA family.

It is found in the cell membrane. This is an uncharacterized protein from Mycobacterium bovis (strain ATCC BAA-935 / AF2122/97).